We begin with the raw amino-acid sequence, 59 residues long: UPF0434 protein Shewmr7_2490 (59 aa).

The protein belongs to the UPF0434 family.

The polypeptide is UPF0434 protein Shewmr7_2490 (Shewanella sp. (strain MR-7)).